Consider the following 400-residue polypeptide: UDP-glucuronate:glycolipid 2-beta-glucuronosyltransferase (400 aa).

Asp157 serves as the catalytic Proton acceptor. UDP-alpha-D-glucuronate-binding positions include 230–231 (SM), 272–273 (EM), Tyr292, and 306–310 (MKLLQ). The disordered stretch occupies residues 377–400 (PETRLYPHPPTAAPQLSSEAALSH). The segment covering 390–400 (PQLSSEAALSH) has biased composition (polar residues).

Belongs to the glycosyltransferase 70 family.

The protein resides in the cell inner membrane. The catalysed reaction is alpha-D-Man-(1-&gt;3)-beta-D-Glc-(1-&gt;4)-alpha-D-Glc-1-di-trans,octa-cis-undecaprenyl diphosphate + UDP-alpha-D-glucuronate = beta-D-GlcA-(1-&gt;2)-alpha-D-Man-(1-&gt;3)-beta-D-Glc-(1-&gt;4)-alpha-D-Glc-di-trans,octa-cis-undecaprenyl diphosphate + UDP + H(+). Its pathway is glycan biosynthesis; xanthan biosynthesis. Catalyzes the transfer of a glucuronic acid (GlcA) residue from UDP-glucuronate to mannose-alpha-1,3-glucose-beta-1,4-glucose-P-P-polyisoprenyl to form the lipid-linked tetrasaccharide GlcA-Man-Glc(2)-PP-Pol, with a glucuronic acid-beta-mannose linkage. Is involved in the biosynthesis of the exopolysaccharide xanthan, since it catalyzes the fourth glycosylation step in the assembly of the pentasaccharide-P-P-polyisoprenyl repeating unit of xanthan. Is unable to use the trisaccharide acceptor freed from the pyrophosphate lipid moiety. Does not show specificity for the lipidic portion of the acceptor. Shows diminished activity when tested with 6-O-acetyl-mannose-alpha-1,3-glucose-beta-1,4-glucose-P-P-polyisoprenyl, a putative intermediate in the synthesis of xanthan; this could indicate that acetylation of the internal mannose takes place after the formation of the GumK product. The chain is UDP-glucuronate:glycolipid 2-beta-glucuronosyltransferase (gumK) from Xanthomonas campestris pv. campestris.